A 524-amino-acid chain; its full sequence is Beta-glucosidase 23 (524 aa).

The N-terminal stretch at 1–24 (MVLQKLPLIGLLLLLTIVASPANA) is a signal peptide. Gln-54 lines the a beta-D-glucoside pocket. N-linked (GlcNAc...) asparagine glycosylation occurs at Asn-60. A beta-D-glucoside is bound by residues His-157 and 202–203 (NE). Catalysis depends on Glu-203, which acts as the Proton donor. Residues Cys-222 and Cys-230 are joined by a disulfide bond. A beta-D-glucoside is bound by residues Tyr-346 and Glu-418. Glu-418 functions as the Nucleophile in the catalytic mechanism. N-linked (GlcNAc...) asparagine glycosylation occurs at Asn-461. Residues Trp-468, 475-476 (EW), and Phe-484 contribute to the a beta-D-glucoside site. A glycan (N-linked (GlcNAc...) asparagine) is linked at Asn-494. A Prevents secretion from ER motif is present at residues 521-524 (KDEL).

This sequence belongs to the glycosyl hydrolase 1 family. As to quaternary structure, homodimers. Binds to the deubiquitinating enzyme AMSH3. The inactive form interacts with PBP1/JAL30 to form the PYK10 complex, at least composed of PYK10/BGLU23, BGLU21, BGLU22, JAL22, JAL23, PBP1/JAL30, PBP2/JAL31, JAL32, JAL33, JAL34, JAL35, GLL22 and GLL23. In terms of processing, forms interchain disulfide bonds. Expressed exclusively in roots.

The protein localises to the endoplasmic reticulum lumen. The enzyme catalyses Hydrolysis of terminal, non-reducing beta-D-glucosyl residues with release of beta-D-glucose.. Its activity is regulated as follows. Activated by tissue damage and upon binding to PBP1 or PBP2. Functionally, beta-D-glucosidase active on scopolin &gt; esculin &gt;&gt; 4-MU-glucoside &gt;&gt; DIMBOA-glucoside. No activity with pNP-glucoside, oNP-glucoside and sinigrin as substrates. May possess beta-D-fucosidase activity. Required for the beneficial interaction with the endophytic fungus P.indica. May participate in the control of root colonization by P.indica by repressing defense responses and modulating other responses required for a mutualistic interaction. This chain is Beta-glucosidase 23, found in Arabidopsis thaliana (Mouse-ear cress).